A 454-amino-acid polypeptide reads, in one-letter code: Histidine--tRNA ligase (454 aa).

The tract at residues 434 to 454 is disordered; it reads ADAGAWNPPTEDLHPGVIGTW.

The protein belongs to the class-II aminoacyl-tRNA synthetase family. As to quaternary structure, homodimer.

The protein localises to the cytoplasm. It catalyses the reaction tRNA(His) + L-histidine + ATP = L-histidyl-tRNA(His) + AMP + diphosphate + H(+). The sequence is that of Histidine--tRNA ligase (hisS) from Cutibacterium acnes (strain DSM 16379 / KPA171202) (Propionibacterium acnes).